The sequence spans 74 residues: Acyl carrier protein (74 aa).

In terms of domain architecture, Carrier spans 1 to 74 (MFEKVRKIIA…DVVEYIKNNS (74 aa)). O-(pantetheine 4'-phosphoryl)serine is present on serine 34.

Belongs to the acyl carrier protein (ACP) family. Post-translationally, 4'-phosphopantetheine is transferred from CoA to a specific serine of apo-ACP by AcpS. This modification is essential for activity because fatty acids are bound in thioester linkage to the sulfhydryl of the prosthetic group.

The protein localises to the cytoplasm. The protein operates within lipid metabolism; fatty acid biosynthesis. In terms of biological role, carrier of the growing fatty acid chain in fatty acid biosynthesis. The sequence is that of Acyl carrier protein from Acetivibrio thermocellus (strain ATCC 27405 / DSM 1237 / JCM 9322 / NBRC 103400 / NCIMB 10682 / NRRL B-4536 / VPI 7372) (Clostridium thermocellum).